We begin with the raw amino-acid sequence, 729 residues long: Polyribonucleotide nucleotidyltransferase (729 aa).

The disordered stretch occupies residues 399 to 419 (YMHNYNFPPYSTGETGRVGSP). Residues aspartate 509 and aspartate 515 each contribute to the Mg(2+) site. One can recognise a KH domain in the interval 575 to 634 (PRVISVKIPVDKIGEVIGPKGKMINQIQADSGAEITVEDDGTIYIGAADGPAAETARSAI). One can recognise an S1 motif domain in the interval 646–718 (GERYLGTIVK…ARGKISLAPG (73 aa)).

Belongs to the polyribonucleotide nucleotidyltransferase family. The cofactor is Mg(2+).

The protein localises to the cytoplasm. It carries out the reaction RNA(n+1) + phosphate = RNA(n) + a ribonucleoside 5'-diphosphate. Involved in mRNA degradation. Catalyzes the phosphorolysis of single-stranded polyribonucleotides processively in the 3'- to 5'-direction. This is Polyribonucleotide nucleotidyltransferase from Parafrankia sp. (strain EAN1pec).